The sequence spans 460 residues: DEAD-box helicase Dbp80 (460 aa).

Serine 26 is modified (phosphoserine). Threonine 30 is subject to Phosphothreonine. Residues 73–101 (KTFEALHLKASLLKGIYAMGFNTPSKIQE) carry the Q motif motif. Positions 106 to 276 (TLLADPPQNM…RLIVADPTII (171 aa)) constitute a Helicase ATP-binding domain. 119–126 (SQSGTGKT) lines the ATP pocket. A DEAD box motif is present at residues 223–226 (DEAD). Residues 287–455 (NIKQYYVKCK…VLNTDSADDI (169 aa)) form the Helicase C-terminal domain.

This sequence belongs to the DEAD box helicase family. DDX19/DBP5 subfamily.

The protein localises to the cytoplasm. The protein resides in the nucleus. It is found in the nucleoplasm. The catalysed reaction is ATP + H2O = ADP + phosphate + H(+). Its function is as follows. ATP-dependent RNA helicase involved in mRNA export from the nucleus. The sequence is that of DEAD-box helicase Dbp80 (Dbp80) from Drosophila melanogaster (Fruit fly).